Reading from the N-terminus, the 148-residue chain is Deoxyuridine 5'-triphosphate nucleotidohydrolase (148 aa).

Residues 67–69 (RSG), N80, 84–86 (LID), and M94 contribute to the substrate site.

It belongs to the dUTPase family. It depends on Mg(2+) as a cofactor.

The enzyme catalyses dUTP + H2O = dUMP + diphosphate + H(+). The protein operates within pyrimidine metabolism; dUMP biosynthesis; dUMP from dCTP (dUTP route): step 2/2. This enzyme is involved in nucleotide metabolism: it produces dUMP, the immediate precursor of thymidine nucleotides and it decreases the intracellular concentration of dUTP so that uracil cannot be incorporated into DNA. The protein is Deoxyuridine 5'-triphosphate nucleotidohydrolase of Burkholderia ambifaria (strain MC40-6).